The following is a 245-amino-acid chain: Small ribosomal subunit protein uS2 (245 aa).

It belongs to the universal ribosomal protein uS2 family.

This is Small ribosomal subunit protein uS2 from Pseudomonas putida (strain ATCC 47054 / DSM 6125 / CFBP 8728 / NCIMB 11950 / KT2440).